Consider the following 337-residue polypeptide: MISVAINGYGTIGKRVADAVAAQDDMKVAGVSKTKPDFEARVAIEKGYDLYVSIPEREKLFGEAGIPVSGTVEDMLEEADIVVDATPEGIGAKNLEMYREKGIKAIFQGGEKHDAIGLSFNSFANYDESLGADYTRVVSCNTTGLCRTLKPIDDLCGIKKVRAVMVRRGADPVQVKKGPINAIVPNPPTVPSHHGPDLKTVMKGVNIHTVALLVPTTLMHQHNIMVELEDPVEADEIKARLDETTRVMLVRASEGLASTAEIMEYAKELGRSRNDLFEIPVWEESINVVDGELFYMQAVHQESDAVPESVDAIRALLELEEDNMKSIMKTNRAMGIL.

NAD(+) contacts are provided by residues 11 to 12 (TI) and glycine 110. 139–141 (SCN) provides a ligand contact to D-glyceraldehyde 3-phosphate. The active-site Nucleophile is the cysteine 140. Arginine 168 serves as a coordination point for NAD(+). Residue 194–195 (HG) participates in D-glyceraldehyde 3-phosphate binding. Glutamine 301 lines the NAD(+) pocket.

Belongs to the glyceraldehyde-3-phosphate dehydrogenase family. In terms of assembly, homotetramer.

The protein resides in the cytoplasm. The catalysed reaction is D-glyceraldehyde 3-phosphate + phosphate + NADP(+) = (2R)-3-phospho-glyceroyl phosphate + NADPH + H(+). It catalyses the reaction D-glyceraldehyde 3-phosphate + phosphate + NAD(+) = (2R)-3-phospho-glyceroyl phosphate + NADH + H(+). The protein operates within carbohydrate degradation; glycolysis; pyruvate from D-glyceraldehyde 3-phosphate: step 1/5. The chain is Glyceraldehyde-3-phosphate dehydrogenase (gap) from Methanothermobacter thermautotrophicus (strain ATCC 29096 / DSM 1053 / JCM 10044 / NBRC 100330 / Delta H) (Methanobacterium thermoautotrophicum).